The sequence spans 253 residues: Shikimate dehydrogenase (NADP(+)) (253 aa).

Shikimate-binding positions include 13–15 (SIS) and Thr59. The active-site Proton acceptor is Lys63. Glu74 lines the NADP(+) pocket. Residues Asn83 and Asp94 each coordinate shikimate. NADP(+) contacts are provided by residues 115–119 (GAGGA), 139–144 (NRTIER), and Val199. Position 201 (Tyr201) interacts with shikimate. Gly221 contributes to the NADP(+) binding site.

The protein belongs to the shikimate dehydrogenase family. In terms of assembly, homodimer.

The catalysed reaction is shikimate + NADP(+) = 3-dehydroshikimate + NADPH + H(+). The protein operates within metabolic intermediate biosynthesis; chorismate biosynthesis; chorismate from D-erythrose 4-phosphate and phosphoenolpyruvate: step 4/7. Involved in the biosynthesis of the chorismate, which leads to the biosynthesis of aromatic amino acids. Catalyzes the reversible NADPH linked reduction of 3-dehydroshikimate (DHSA) to yield shikimate (SA). The chain is Shikimate dehydrogenase (NADP(+)) from Thermotoga maritima (strain ATCC 43589 / DSM 3109 / JCM 10099 / NBRC 100826 / MSB8).